The primary structure comprises 198 residues: NAD(P)H dehydrogenase (quinone) (198 aa).

In terms of domain architecture, Flavodoxin-like spans 4–189 (VLVLYYSMYG…ALARYQGRHV (186 aa)). FMN-binding positions include 10-15 (SMYGHV) and 78-80 (TRF). Tyr-12 contributes to the NAD(+) binding site. Trp-98 is a binding site for substrate. FMN-binding positions include 113–118 (STGTGG) and His-133.

This sequence belongs to the WrbA family. It depends on FMN as a cofactor.

The catalysed reaction is a quinone + NADH + H(+) = a quinol + NAD(+). It carries out the reaction a quinone + NADPH + H(+) = a quinol + NADP(+). The chain is NAD(P)H dehydrogenase (quinone) from Halorhodospira halophila (strain DSM 244 / SL1) (Ectothiorhodospira halophila (strain DSM 244 / SL1)).